A 369-amino-acid polypeptide reads, in one-letter code: Flagellar P-ring protein (369 aa).

The signal sequence occupies residues 1 to 24 (MKTLHRCIGVALLALGALAGTAHA).

The protein belongs to the FlgI family. The basal body constitutes a major portion of the flagellar organelle and consists of four rings (L,P,S, and M) mounted on a central rod.

The protein resides in the periplasm. Its subcellular location is the bacterial flagellum basal body. In terms of biological role, assembles around the rod to form the L-ring and probably protects the motor/basal body from shearing forces during rotation. In Ralstonia nicotianae (strain ATCC BAA-1114 / GMI1000) (Ralstonia solanacearum), this protein is Flagellar P-ring protein.